Here is a 647-residue protein sequence, read N- to C-terminus: DNA mismatch repair protein MutL (647 aa).

Residues E377–W396 are disordered. The span at Q387–W396 shows a compositional bias: low complexity.

The protein belongs to the DNA mismatch repair MutL/HexB family.

Functionally, this protein is involved in the repair of mismatches in DNA. It is required for dam-dependent methyl-directed DNA mismatch repair. May act as a 'molecular matchmaker', a protein that promotes the formation of a stable complex between two or more DNA-binding proteins in an ATP-dependent manner without itself being part of a final effector complex. The chain is DNA mismatch repair protein MutL from Bacillus cereus (strain AH187).